The primary structure comprises 212 residues: ER lumen protein-retaining receptor (212 aa).

Residues 1 to 2 (MN) lie on the Lumenal side of the membrane. A helical membrane pass occupies residues 3–21 (IFRFAGDLSHVFAIIILLL). The Cytoplasmic segment spans residues 22-35 (KIWKTRSCAGISGK). The helical transmembrane segment at 36 to 53 (SQILFAVVYLTRYLDLFT) threads the bilayer. The Lumenal segment spans residues 54–61 (TYVSLYNS). A helical transmembrane segment spans residues 62-80 (VMKVLFLATSGATVYLMYV). Residues 81–96 (KFKATYDHNHDSFRIE) lie on the Cytoplasmic side of the membrane. A helical membrane pass occupies residues 97–110 (FLLVPCALLSLVIN). Topologically, residues 111-117 (HEFTVME) are lumenal. Residues 118 to 137 (VLWTFSIYLESVAILPQLFL) form a helical membrane-spanning segment. The Cytoplasmic portion of the chain corresponds to 138-149 (VSRTGEAESITS). Residues 150 to 168 (HYLFALGSYRALYLLNWVY) traverse the membrane as a helical segment. The Lumenal segment spans residues 169 to 178 (RYMVESHYDL). A helical transmembrane segment spans residues 179–199 (IAIFAGVVQTVLYCDFFYLYI). The Cytoplasmic segment spans residues 200–212 (TKVLKGKKLQLPA).

It belongs to the ERD2 family.

It is found in the endoplasmic reticulum membrane. Its function is as follows. Required for the retention of luminal endoplasmic reticulum proteins. Determines the specificity of the luminal ER protein retention system. Also required for normal vesicular traffic through the Golgi. The sequence is that of ER lumen protein-retaining receptor (KdelR) from Drosophila melanogaster (Fruit fly).